We begin with the raw amino-acid sequence, 881 residues long: DNA mismatch repair protein MutS (881 aa).

627–634 (GPNMGGKS) lines the ATP pocket.

This sequence belongs to the DNA mismatch repair MutS family.

This protein is involved in the repair of mismatches in DNA. It is possible that it carries out the mismatch recognition step. This protein has a weak ATPase activity. The protein is DNA mismatch repair protein MutS of Acinetobacter baumannii (strain AB307-0294).